The following is a 201-amino-acid chain: UPF0301 protein Smed_0532 (201 aa).

It belongs to the UPF0301 (AlgH) family.

In Sinorhizobium medicae (strain WSM419) (Ensifer medicae), this protein is UPF0301 protein Smed_0532.